A 361-amino-acid chain; its full sequence is Glycerophosphodiester phosphodiesterase GDPD1, chloroplastic (361 aa).

The transit peptide at 1–53 (MSLKAIHVSEVPSLDHFPENPSLICSSRKANNKFVVVGHRGHGMNMSQSPDLR) directs the protein to the chloroplast. The region spanning 54-323 (FSALKENSIL…DHVEEITEAV (270 aa)) is the GP-PDE domain.

This sequence belongs to the glycerophosphoryl diester phosphodiesterase family. Mg(2+) is required as a cofactor. As to expression, expressed in roots, shoots, rosette leaves, stems, flowers and siliques.

The protein localises to the plastid. The protein resides in the chloroplast. It catalyses the reaction a sn-glycero-3-phosphodiester + H2O = an alcohol + sn-glycerol 3-phosphate + H(+). Functionally, hydrolyzes glycerolphosphoglycerol, glycerophosphocholine and glycerophosphoethanolamine in vitro. May be involved in release of inorganic phosphate (Pi) from phospholipids during Pi starvation. The sequence is that of Glycerophosphodiester phosphodiesterase GDPD1, chloroplastic from Arabidopsis thaliana (Mouse-ear cress).